The following is a 204-amino-acid chain: MPYPFKLPDLGYPYEALEPHIDAKTMEIHHQKHHGAYVTNLNAALEKYPYLHGVEVEVLLRHLAALPQDIQTAVRNNGGGHLNHSLFWRLLTPGGAKEPVGELKKAIDEQFGGFQALKEKLTQAAMGRFGSGWAWLVKDPFGKLHVLSTPNQDNPVMEGFTPIVGIDVWEHAYYLKYQNRRADYLQAIWNVLNWDVAEEFFKKA.

Mn(2+) is bound by residues histidine 29, histidine 84, aspartate 167, and histidine 171.

It belongs to the iron/manganese superoxide dismutase family. As to quaternary structure, homotetramer. Mn(2+) is required as a cofactor.

It carries out the reaction 2 superoxide + 2 H(+) = H2O2 + O2. Destroys superoxide anion radicals which are normally produced within the cells and which are toxic to biological systems. The protein is Superoxide dismutase [Mn] (sodA) of Thermus thermophilus (strain ATCC BAA-163 / DSM 7039 / HB27).